Consider the following 307-residue polypeptide: Pseudouridine-5'-phosphate glycosidase (307 aa).

E28 functions as the Proton donor in the catalytic mechanism. Positions 89 and 109 each coordinate substrate. D141 provides a ligand contact to Mn(2+). Position 143–145 (143–145) interacts with substrate; that stretch reads SAD. Residue K162 is the Nucleophile of the active site.

It belongs to the pseudouridine-5'-phosphate glycosidase family. In terms of assembly, homotrimer. Requires Mn(2+) as cofactor.

The catalysed reaction is D-ribose 5-phosphate + uracil = psi-UMP + H2O. Functionally, catalyzes the reversible cleavage of pseudouridine 5'-phosphate (PsiMP) to ribose 5-phosphate and uracil. Functions biologically in the cleavage direction, as part of a pseudouridine degradation pathway. The sequence is that of Pseudouridine-5'-phosphate glycosidase from Nocardioides sp. (strain ATCC BAA-499 / JS614).